Here is a 413-residue protein sequence, read N- to C-terminus: uncharacterized protein (413 aa).

A helical transmembrane segment spans residues 25-47 (IVNLSALLPLITSTTSTAGSIIT).

It is found in the host membrane. This is an uncharacterized protein from Acidianus sp. F28 (AFV-2).